Consider the following 357-residue polypeptide: Low-salt glycan biosynthesis nucleotidyltransferase Agl11 (357 aa).

Positions 108 and 221 each coordinate Mg(2+).

This sequence belongs to the glucose-1-phosphate thymidylyltransferase family. Requires Mg(2+) as cofactor.

It functions in the pathway protein modification; protein glycosylation. The protein operates within cell surface structure biogenesis; S-layer biogenesis. Nucleotidyltransferase involved in N-glycan biosynthetic pathway that takes place under low-salt conditions (1.75 M instead of 3.4 M). Participates in the formation of the tetrasaccharide present at 'Asn-532' of S-layer glycoprotein Csg, consisting of a sulfated hexose, 2 hexoses and rhamnose. Involved in the addition of final rhamnose (sugar 4) of the tetrasaccharide on the dolichol phosphate carrier. The polypeptide is Low-salt glycan biosynthesis nucleotidyltransferase Agl11 (agl11) (Haloferax volcanii (strain ATCC 29605 / DSM 3757 / JCM 8879 / NBRC 14742 / NCIMB 2012 / VKM B-1768 / DS2) (Halobacterium volcanii)).